A 333-amino-acid chain; its full sequence is uncharacterized protein (333 aa).

The Radical SAM core domain maps to 67–274 (HFYPTTQVVS…LEMARNLAIE (208 aa)). Residues cysteine 82, cysteine 86, and cysteine 89 each contribute to the [4Fe-4S] cluster site.

[4Fe-4S] cluster is required as a cofactor.

This is an uncharacterized protein from Methanocaldococcus jannaschii (strain ATCC 43067 / DSM 2661 / JAL-1 / JCM 10045 / NBRC 100440) (Methanococcus jannaschii).